The following is a 298-amino-acid chain: Lipoyl synthase 1 (298 aa).

Residues cysteine 34, cysteine 39, cysteine 45, cysteine 60, cysteine 64, cysteine 67, and serine 274 each contribute to the [4Fe-4S] cluster site. A Radical SAM core domain is found at 46 to 263; the sequence is FKAGTATFLI…RRAGEGMGFL (218 aa). The segment at 277 to 298 is disordered; that stretch reads AEQVQRLMRSHPRTPKNQHSPE.

The protein belongs to the radical SAM superfamily. Lipoyl synthase family. [4Fe-4S] cluster serves as cofactor.

The protein resides in the cytoplasm. It carries out the reaction [[Fe-S] cluster scaffold protein carrying a second [4Fe-4S](2+) cluster] + N(6)-octanoyl-L-lysyl-[protein] + 2 oxidized [2Fe-2S]-[ferredoxin] + 2 S-adenosyl-L-methionine + 4 H(+) = [[Fe-S] cluster scaffold protein] + N(6)-[(R)-dihydrolipoyl]-L-lysyl-[protein] + 4 Fe(3+) + 2 hydrogen sulfide + 2 5'-deoxyadenosine + 2 L-methionine + 2 reduced [2Fe-2S]-[ferredoxin]. Its pathway is protein modification; protein lipoylation via endogenous pathway; protein N(6)-(lipoyl)lysine from octanoyl-[acyl-carrier-protein]: step 2/2. In terms of biological role, catalyzes the radical-mediated insertion of two sulfur atoms into the C-6 and C-8 positions of the octanoyl moiety bound to the lipoyl domains of lipoate-dependent enzymes, thereby converting the octanoylated domains into lipoylated derivatives. The polypeptide is Lipoyl synthase 1 (Gloeobacter violaceus (strain ATCC 29082 / PCC 7421)).